The primary structure comprises 611 residues: MAU2 chromatid cohesion factor homolog (611 aa).

TPR repeat units lie at residues 11–46 (YAGL…NPPP), 91–124 (FEAS…TSGE), 131–164 (FRLF…AEQC), 371–404 (PILH…ADNP), and 490–523 (ACSL…SGKI). The interval 581-611 (WTGAVSPTKSSTIPPQQSFQTWSQPGPSRLS) is disordered. Over residues 585–611 (VSPTKSSTIPPQQSFQTWSQPGPSRLS) the composition is skewed to polar residues.

The protein belongs to the SCC4/mau-2 family. As to quaternary structure, component of the cohesin loading complex.

It localises to the nucleus. It is found in the nucleoplasm. In terms of biological role, required for association of the cohesin complex with chromatin during interphase. Plays a role in sister chromatid cohesion and normal progression through prometaphase. This chain is MAU2 chromatid cohesion factor homolog, found in Nematostella vectensis (Starlet sea anemone).